Here is a 273-residue protein sequence, read N- to C-terminus: Dermonecrotic toxin LspaSicTox-alphaIA2iv (273 aa).

H5 is an active-site residue. Residues E25 and D27 each coordinate Mg(2+). The Nucleophile role is filled by H41. Cystine bridges form between C45/C51 and C47/C190. D85 serves as a coordination point for Mg(2+).

Belongs to the arthropod phospholipase D family. Class II subfamily. Requires Mg(2+) as cofactor. Expressed by the venom gland.

The protein resides in the secreted. It catalyses the reaction an N-(acyl)-sphingosylphosphocholine = an N-(acyl)-sphingosyl-1,3-cyclic phosphate + choline. The catalysed reaction is an N-(acyl)-sphingosylphosphoethanolamine = an N-(acyl)-sphingosyl-1,3-cyclic phosphate + ethanolamine. The enzyme catalyses a 1-acyl-sn-glycero-3-phosphocholine = a 1-acyl-sn-glycero-2,3-cyclic phosphate + choline. It carries out the reaction a 1-acyl-sn-glycero-3-phosphoethanolamine = a 1-acyl-sn-glycero-2,3-cyclic phosphate + ethanolamine. In terms of biological role, dermonecrotic toxins cleave the phosphodiester linkage between the phosphate and headgroup of certain phospholipids (sphingolipid and lysolipid substrates), forming an alcohol (often choline) and a cyclic phosphate. This toxin acts on sphingomyelin (SM). It may also act on ceramide phosphoethanolamine (CPE), lysophosphatidylcholine (LPC) and lysophosphatidylethanolamine (LPE), but not on lysophosphatidylserine (LPS), and lysophosphatidylglycerol (LPG). It acts by transphosphatidylation, releasing exclusively cyclic phosphate products as second products. Induces dermonecrosis, hemolysis, increased vascular permeability, edema, inflammatory response, and platelet aggregation. In Loxosceles spadicea (Recluse spider), this protein is Dermonecrotic toxin LspaSicTox-alphaIA2iv.